The chain runs to 252 residues: ATP synthase subunit a (252 aa).

A run of 6 helical transmembrane segments spans residues 29–49 (FTNSALFMVATVVVAAAFLFL), 87–107 (FFPLVFSLFMFVLVANLLGLF), 117–137 (IIVTFGLAILVIGTVIVYGFM), 146–166 (LFVPKGVPLVMMVLVVPIEVI), 188–208 (ITLKVFSGFVVSLSALGAVGV), and 211–231 (SILPLAMAVALTALELLVAFL).

The protein belongs to the ATPase A chain family. F-type ATPases have 2 components, CF(1) - the catalytic core - and CF(0) - the membrane proton channel. CF(1) has five subunits: alpha(3), beta(3), gamma(1), delta(1), epsilon(1). CF(0) has three main subunits: a(1), b(2) and c(9-12). The alpha and beta chains form an alternating ring which encloses part of the gamma chain. CF(1) is attached to CF(0) by a central stalk formed by the gamma and epsilon chains, while a peripheral stalk is formed by the delta and b chains.

It is found in the cell inner membrane. Functionally, key component of the proton channel; it plays a direct role in the translocation of protons across the membrane. This Mesorhizobium japonicum (strain LMG 29417 / CECT 9101 / MAFF 303099) (Mesorhizobium loti (strain MAFF 303099)) protein is ATP synthase subunit a.